Here is a 246-residue protein sequence, read N- to C-terminus: Large ribosomal subunit protein uL3 (246 aa).

Disordered regions lie at residues Ser140 to Met162 and Asp215 to Ala246. Gln151 carries the post-translational modification N5-methylglutamine. Positions Glu234–Ala246 are enriched in low complexity.

This sequence belongs to the universal ribosomal protein uL3 family. As to quaternary structure, part of the 50S ribosomal subunit. Forms a cluster with proteins L14 and L19. Methylated by PrmB.

In terms of biological role, one of the primary rRNA binding proteins, it binds directly near the 3'-end of the 23S rRNA, where it nucleates assembly of the 50S subunit. This chain is Large ribosomal subunit protein uL3, found in Methylorubrum extorquens (strain PA1) (Methylobacterium extorquens).